Consider the following 467-residue polypeptide: Putative alpha-amylase (467 aa).

Catalysis depends on E145, which acts as the Nucleophile.

It belongs to the glycosyl hydrolase 57 family.

The enzyme catalyses Endohydrolysis of (1-&gt;4)-alpha-D-glucosidic linkages in polysaccharides containing three or more (1-&gt;4)-alpha-linked D-glucose units.. The protein is Putative alpha-amylase of Methanocaldococcus jannaschii (strain ATCC 43067 / DSM 2661 / JAL-1 / JCM 10045 / NBRC 100440) (Methanococcus jannaschii).